The following is a 148-amino-acid chain: Oleosin 16 kDa (148 aa).

Positions 1 to 21 are disordered; that stretch reads MADQHRGVIGGGGYGDRGGQE. Position 2 is an N-acetylalanine (Ala-2). Positions 2–34 are polar; it reads ADQHRGVIGGGGYGDRGGQEQQEKQPFMMTALK. The segment covering 8–17 has biased composition (gly residues); that stretch reads VIGGGGYGDR. The hydrophobic stretch occupies residues 35–106; sequence TVTAATAGGS…AALSVFSWMY (72 aa). The next 3 helical transmembrane spans lie at 43–63, 66–86, and 87–107; these read GSML…LTVA, VLVI…LMAA, and GFVT…WMYK.

Belongs to the oleosin family.

The protein resides in the lipid droplet. It is found in the membrane. May have a structural role to stabilize the lipid body during desiccation of the seed by preventing coalescence of the oil. Probably interacts with both lipid and phospholipid moieties of lipid bodies. May also provide recognition signals for specific lipase anchorage in lipolysis during seedling growth. The polypeptide is Oleosin 16 kDa (OLE16) (Oryza sativa subsp. japonica (Rice)).